The primary structure comprises 87 residues: uncharacterized protein (87 aa).

An N-terminal signal peptide occupies residues 1-22 (MKIKTTVAALSVLSVLSFGAFA).

Belongs to the BhsA/McbA family.

Its subcellular location is the periplasm. This is an uncharacterized protein from Escherichia coli O6:H1 (strain CFT073 / ATCC 700928 / UPEC).